The chain runs to 178 residues: Protein SPEAR1 (178 aa).

2 disordered regions span residues 1 to 48 (MGST…QRGL) and 139 to 178 (HFLN…RLSL). A compositionally biased stretch (low complexity) spans 14-28 (SSPPSSSPTSSSSSP). Residues 46–54 (RGLGVAQLE) carry the SPL motif. Over residues 144 to 167 (DPSSTTRRSKSLGSGIQHSGSSEN) the composition is skewed to polar residues. The short motif at 170-176 (VDLELRL) is the EAR element.

As to quaternary structure, interacts with SPL and SPEAR2. In terms of tissue distribution, not detected in leaves.

Functionally, adapter-like transcriptional repressor recruiting TPL/TPR corepressors to inhibit TCP transcription factors. The chain is Protein SPEAR1 from Arabidopsis thaliana (Mouse-ear cress).